A 616-amino-acid chain; its full sequence is Dihydroxy-acid dehydratase (616 aa).

D81 contacts Mg(2+). C122 lines the [2Fe-2S] cluster pocket. Residues D123 and K124 each contribute to the Mg(2+) site. N6-carboxylysine is present on K124. C195 lines the [2Fe-2S] cluster pocket. E491 contacts Mg(2+). S517 (proton acceptor) is an active-site residue.

Belongs to the IlvD/Edd family. Homodimer. The cofactor is [2Fe-2S] cluster. Mg(2+) serves as cofactor.

It catalyses the reaction (2R)-2,3-dihydroxy-3-methylbutanoate = 3-methyl-2-oxobutanoate + H2O. The catalysed reaction is (2R,3R)-2,3-dihydroxy-3-methylpentanoate = (S)-3-methyl-2-oxopentanoate + H2O. It functions in the pathway amino-acid biosynthesis; L-isoleucine biosynthesis; L-isoleucine from 2-oxobutanoate: step 3/4. The protein operates within amino-acid biosynthesis; L-valine biosynthesis; L-valine from pyruvate: step 3/4. Its function is as follows. Functions in the biosynthesis of branched-chain amino acids. Catalyzes the dehydration of (2R,3R)-2,3-dihydroxy-3-methylpentanoate (2,3-dihydroxy-3-methylvalerate) into 2-oxo-3-methylpentanoate (2-oxo-3-methylvalerate) and of (2R)-2,3-dihydroxy-3-methylbutanoate (2,3-dihydroxyisovalerate) into 2-oxo-3-methylbutanoate (2-oxoisovalerate), the penultimate precursor to L-isoleucine and L-valine, respectively. This Escherichia coli O1:K1 / APEC protein is Dihydroxy-acid dehydratase.